A 488-amino-acid chain; its full sequence is Ribulose bisphosphate carboxylase large chain 1 (488 aa).

Asparagine 128 and threonine 178 together coordinate substrate. The active-site Proton acceptor is lysine 180. Lysine 182 provides a ligand contact to substrate. Mg(2+) is bound by residues lysine 206, aspartate 208, and glutamate 209. Lysine 206 is subject to N6-carboxylysine. The active-site Proton acceptor is histidine 298. Positions 299, 331, and 383 each coordinate substrate.

It belongs to the RuBisCO large chain family. Type I subfamily. In terms of assembly, heterohexadecamer of 8 large chains and 8 small chains. Mg(2+) serves as cofactor.

It carries out the reaction 2 (2R)-3-phosphoglycerate + 2 H(+) = D-ribulose 1,5-bisphosphate + CO2 + H2O. It catalyses the reaction D-ribulose 1,5-bisphosphate + O2 = 2-phosphoglycolate + (2R)-3-phosphoglycerate + 2 H(+). Its function is as follows. RuBisCO catalyzes two reactions: the carboxylation of D-ribulose 1,5-bisphosphate, the primary event in carbon dioxide fixation, as well as the oxidative fragmentation of the pentose substrate. Both reactions occur simultaneously and in competition at the same active site. The chain is Ribulose bisphosphate carboxylase large chain 1 from Methylibium petroleiphilum (strain ATCC BAA-1232 / LMG 22953 / PM1).